The primary structure comprises 2193 residues: Genome polyprotein (2193 aa).

Positions 1–22 (MGSQVSTQRSGSHENSNSASEG) are disordered. Residue glycine 2 is the site of N-myristoyl glycine; by host attachment. Residues 2–1503 (GSQVSTQRSG…HLNRAVLIMQ (1502 aa)) are Cytoplasmic-facing. Amphipathic alpha-helix stretches follow at residues 566–588 (GDGI…LTSL) and 568–588 (GIAD…LTSL). Active-site for protease 2A activity residues include histidine 883 and aspartate 901. Residues cysteine 918 and cysteine 920 each coordinate Zn(2+). Cysteine 972 functions as the For protease 2A activity in the catalytic mechanism. Zn(2+) is bound by residues cysteine 978 and histidine 980. Residues 1112–1184 (SASWLKKFND…EQSAASQEDL (73 aa)) form a membrane-binding region. Positions 1112 to 1250 (SASWLKKFND…SPGTGKSLAT (139 aa)) are oligomerization. The interval 1133–1137 (SNKIS) is RNA-binding. An SF3 helicase domain is found at 1216 to 1374 (EKRMNNYMQF…YKTDLGRLDA (159 aa)). Position 1240–1247 (1240–1247 (GSPGTGKS)) interacts with ATP. The Zn(2+) site is built by cysteine 1381, cysteine 1392, and cysteine 1397. Residues 1381–1397 (CSENNTANFKRCSPLVC) form a C4-type; degenerate zinc finger. The segment at 1424–1431 (EYNNRYAI) is RNA-binding. Residues 1435-1440 (IEALFQ) are oligomerization. The stretch at 1504 to 1519 (SIATVVAVVSLVYVIY) is an intramembrane region. Residues 1520-2193 (KLFAGFQGAY…NLRRNWLELF (674 aa)) are Cytoplasmic-facing. O-(5'-phospho-RNA)-tyrosine is present on tyrosine 1529. The 179-residue stretch at 1549 to 1727 (GPSLDFALSL…FCAGLKRSYF (179 aa)) folds into the Peptidase C3 domain. Catalysis depends on for protease 3C activity residues histidine 1588, glutamate 1619, and cysteine 1695. Positions 1958–2073 (GSLFAFDYSG…ASYPFPIDCL (116 aa)) constitute a RdRp catalytic domain. Residues aspartate 1964 and aspartate 2060 each contribute to the Mg(2+) site.

The protein belongs to the picornaviruses polyprotein family. As to quaternary structure, interacts with capsid protein VP1 and capsid protein VP3 to form heterotrimeric protomers. Interacts with capsid protein VP0, and capsid protein VP3 to form heterotrimeric protomers. Five protomers subsequently associate to form pentamers which serve as building blocks for the capsid. Interacts with capsid protein VP2, capsid protein VP3 and capsid protein VP4 following cleavage of capsid protein VP0. In terms of assembly, interacts with capsid protein VP1 and capsid protein VP3 in the mature capsid. As to quaternary structure, interacts with capsid protein VP0 and capsid protein VP1 to form heterotrimeric protomers. Five protomers subsequently associate to form pentamers which serve as building blocks for the capsid. Interacts with capsid protein VP4 in the mature capsid. Interacts with protein 2C; this interaction may be important for virion morphogenesis. Interacts with capsid protein VP1 and capsid protein VP3. In terms of assembly, homodimer. As to quaternary structure, homohexamer; forms a hexameric ring structure with 6-fold symmetry characteristic of AAA+ ATPases. Interacts (via N-terminus) with host RTN3 (via reticulon domain); this interaction is important for viral replication. Interacts with capsid protein VP3; this interaction may be important for virion morphogenesis. Interacts with protein 3CD. In terms of assembly, homodimer. Interacts with host GBF1. Interacts (via GOLD domain) with host ACBD3 (via GOLD domain); this interaction allows the formation of a viral protein 3A/ACBD3 heterotetramer with a 2:2 stoichiometry, which will stimulate the recruitment of host PI4KB in order to synthesize PI4P at the viral RNA replication sites. As to quaternary structure, interacts with RNA-directed RNA polymerase. Interacts with host IFIH1/MDA5; this interaction inhibits host IFIH1. In terms of assembly, interacts with protein 3AB and with RNA-directed RNA polymerase. As to quaternary structure, interacts with Viral protein genome-linked and with protein 3CD. Mg(2+) serves as cofactor. Specific enzymatic cleavages in vivo by the viral proteases yield processing intermediates and the mature proteins. In terms of processing, myristoylation is required for the formation of pentamers during virus assembly. Further assembly of 12 pentamers and a molecule of genomic RNA generates the provirion. Post-translationally, during virion maturation, immature virions are rendered infectious following cleavage of VP0 into VP4 and VP2. This maturation seems to be an autocatalytic event triggered by the presence of RNA in the capsid and it is followed by a conformational change infectious virion. Myristoylation is required during RNA encapsidation and formation of the mature virus particle. In terms of processing, VPg is uridylylated by the polymerase into VPg-pUpU. This acts as a nucleotide-peptide primer for the genomic RNA replication.

Its subcellular location is the virion. It localises to the host cytoplasm. The protein localises to the host cytoplasmic vesicle membrane. The protein resides in the host nucleus. The enzyme catalyses a ribonucleoside 5'-triphosphate + H2O = a ribonucleoside 5'-diphosphate + phosphate + H(+). It catalyses the reaction Selective cleavage of Tyr-|-Gly bond in the picornavirus polyprotein.. The catalysed reaction is RNA(n) + a ribonucleoside 5'-triphosphate = RNA(n+1) + diphosphate. It carries out the reaction Selective cleavage of Gln-|-Gly bond in the poliovirus polyprotein. In other picornavirus reactions Glu may be substituted for Gln, and Ser or Thr for Gly.. Its activity is regulated as follows. Replication or transcription is subject to high level of random mutations by the nucleotide analog ribavirin. In terms of biological role, forms an icosahedral capsid of pseudo T=3 symmetry with capsid proteins VP2 and VP3. The capsid is 300 Angstroms in diameter, composed of 60 copies of each capsid protein and enclosing the viral positive strand RNA genome. Capsid protein VP1 mainly forms the vertices of the capsid. Capsid protein VP1 interacts with host cell receptor to provide virion attachment to target host cells. This attachment induces virion internalization. After binding to its receptor, the capsid undergoes conformational changes. Capsid protein VP1 N-terminus (that contains an amphipathic alpha-helix) and capsid protein VP4 are externalized. Together, they shape a pore in the host membrane through which viral genome is translocated to host cell cytoplasm. Forms an icosahedral capsid of pseudo T=3 symmetry with capsid proteins VP2 and VP3. The capsid is 300 Angstroms in diameter, composed of 60 copies of each capsid protein and enclosing the viral positive strand RNA genome. Its function is as follows. Lies on the inner surface of the capsid shell. After binding to the host receptor, the capsid undergoes conformational changes. Capsid protein VP4 is released, Capsid protein VP1 N-terminus is externalized, and together, they shape a pore in the host membrane through which the viral genome is translocated into the host cell cytoplasm. Functionally, component of immature procapsids, which is cleaved into capsid proteins VP4 and VP2 after maturation. Allows the capsid to remain inactive before the maturation step. In terms of biological role, cysteine protease that cleaves viral polyprotein and specific host proteins. It is responsible for the autocatalytic cleavage between the P1 and P2 regions, which is the first cleavage occurring in the polyprotein. Also cleaves the host translation initiation factor EIF4G1, in order to shut down the capped cellular mRNA translation. Inhibits the host nucleus-cytoplasm protein and RNA trafficking by cleaving host members of the nuclear pores. Counteracts stress granule formation probably by antagonizing its assembly or promoting its dissassembly. Cleaves and inhibits host IFIH1/MDA5, thereby inhibiting the type-I IFN production and the establishment of the antiviral state. Cleaves and inhibits host MAVS, thereby inhibiting the type-I IFN production and the establishment of the antiviral state. Plays an essential role in the virus replication cycle by acting as a viroporin. Creates a pore in the host endoplasmic reticulum and as a consequence releases Ca2+ in the cytoplasm of infected cell. In turn, high levels of cytoplasmic calcium may trigger membrane trafficking and transport of viral ER-associated proteins to viroplasms, sites of viral genome replication. Its function is as follows. Induces and associates with structural rearrangements of intracellular membranes. Displays RNA-binding, nucleotide binding and NTPase activities. May play a role in virion morphogenesis and viral RNA encapsidation by interacting with the capsid protein VP3. Functionally, localizes the viral replication complex to the surface of membranous vesicles. Together with protein 3CD binds the Cis-Active RNA Element (CRE) which is involved in RNA synthesis initiation. Acts as a cofactor to stimulate the activity of 3D polymerase, maybe through a nucleid acid chaperone activity. In terms of biological role, localizes the viral replication complex to the surface of membranous vesicles. It inhibits host cell endoplasmic reticulum-to-Golgi apparatus transport and causes the disassembly of the Golgi complex, possibly through GBF1 interaction. This would result in depletion of MHC, trail receptors and IFN receptors at the host cell surface. Plays an essential role in viral RNA replication by recruiting ACBD3 and PI4KB at the viral replication sites, thereby allowing the formation of the rearranged membranous structures where viral replication takes place. Acts as a primer for viral RNA replication and remains covalently bound to viral genomic RNA. VPg is uridylylated prior to priming replication into VPg-pUpU. The oriI viral genomic sequence may act as a template for this. The VPg-pUpU is then used as primer on the genomic RNA poly(A) by the RNA-dependent RNA polymerase to replicate the viral genome. During genome replication, the VPg-RNA linkage is removed by the host TDP2, thereby accelerating replication. During the late stage of the replication cycle, host TDP2 is excluded from sites of viral RNA synthesis and encapsidation, allowing for the generation of progeny virions. Its function is as follows. Involved in the viral replication complex and viral polypeptide maturation. It exhibits protease activity with a specificity and catalytic efficiency that is different from protease 3C. Protein 3CD lacks polymerase activity. Protein 3CD binds to the 5'UTR of the viral genome. Functionally, major viral protease that mediates proteolytic processing of the polyprotein. Cleaves host EIF5B, contributing to host translation shutoff. Also cleaves host PABPC1, contributing to host translation shutoff. Binds and inhibits host IFIH1/MDA5, thereby inhibiting the type-I IFN production and the establishment of the antiviral state. Cleaves host MAP3K7/TAK1, resulting in inhibition of TRAF6-triggered NF-kappa-B induction. Cleaves host NLRP1, triggers host N-glycine-mediated degradation of the autoinhibitory NLRP1 N-terminal fragment. In terms of biological role, replicates the viral genomic RNA on the surface of intracellular membranes. May form linear arrays of subunits that propagate along a strong head-to-tail interaction called interface-I. Covalently attaches UMP to a tyrosine of VPg, which is used to prime RNA synthesis. The positive stranded RNA genome is first replicated at virus induced membranous vesicles, creating a dsRNA genomic replication form. This dsRNA is then used as template to synthesize positive stranded RNA genomes. ss(+)RNA genomes are either translated, replicated or encapsidated. In Homo sapiens (Human), this protein is Genome polyprotein.